A 364-amino-acid polypeptide reads, in one-letter code: Histidinol-phosphate aminotransferase (364 aa).

Residues 1–46 form a disordered region; that stretch reads MQPRDLSDHSPYVPGRGVEEVARDRGLDPDDLIKLSSNENPHGPSP. The segment covering 17–33 has biased composition (basic and acidic residues); that stretch reads GVEEVARDRGLDPDDLI. At Lys222 the chain carries N6-(pyridoxal phosphate)lysine.

Belongs to the class-II pyridoxal-phosphate-dependent aminotransferase family. Histidinol-phosphate aminotransferase subfamily. Pyridoxal 5'-phosphate serves as cofactor.

It carries out the reaction L-histidinol phosphate + 2-oxoglutarate = 3-(imidazol-4-yl)-2-oxopropyl phosphate + L-glutamate. It participates in amino-acid biosynthesis; L-histidine biosynthesis; L-histidine from 5-phospho-alpha-D-ribose 1-diphosphate: step 7/9. This chain is Histidinol-phosphate aminotransferase, found in Halorubrum lacusprofundi (strain ATCC 49239 / DSM 5036 / JCM 8891 / ACAM 34).